We begin with the raw amino-acid sequence, 336 residues long: UPF0065 protein in tcbD-tcbE intergenic region (336 aa).

Residues 1–32 (MHSSKCPDLANIGRRRVLAGIALAMTTSSTRA) form the signal peptide.

The protein belongs to the UPF0065 (bug) family.

It localises to the periplasm. This is UPF0065 protein in tcbD-tcbE intergenic region from Pseudomonas sp. (strain P51).